The primary structure comprises 93 residues: Small ribosomal subunit protein uS19 (93 aa).

This sequence belongs to the universal ribosomal protein uS19 family.

Functionally, protein S19 forms a complex with S13 that binds strongly to the 16S ribosomal RNA. In Renibacterium salmoninarum (strain ATCC 33209 / DSM 20767 / JCM 11484 / NBRC 15589 / NCIMB 2235), this protein is Small ribosomal subunit protein uS19.